The sequence spans 925 residues: Protein translocase subunit SecA (925 aa).

ATP contacts are provided by residues Gln87, Gly105–Thr109, and Asp515. Residues Cys909, Cys911, Cys920, and His921 each contribute to the Zn(2+) site.

It belongs to the SecA family. Monomer and homodimer. Part of the essential Sec protein translocation apparatus which comprises SecA, SecYEG and auxiliary proteins SecDF-YajC and YidC. Zn(2+) serves as cofactor.

It is found in the cell inner membrane. The protein localises to the cytoplasm. The enzyme catalyses ATP + H2O + cellular proteinSide 1 = ADP + phosphate + cellular proteinSide 2.. In terms of biological role, part of the Sec protein translocase complex. Interacts with the SecYEG preprotein conducting channel. Has a central role in coupling the hydrolysis of ATP to the transfer of proteins into and across the cell membrane, serving both as a receptor for the preprotein-SecB complex and as an ATP-driven molecular motor driving the stepwise translocation of polypeptide chains across the membrane. The protein is Protein translocase subunit SecA of Cupriavidus taiwanensis (strain DSM 17343 / BCRC 17206 / CCUG 44338 / CIP 107171 / LMG 19424 / R1) (Ralstonia taiwanensis (strain LMG 19424)).